Reading from the N-terminus, the 223-residue chain is Uracil phosphoribosyltransferase (223 aa).

5-phospho-alpha-D-ribose 1-diphosphate is bound by residues arginine 86, arginine 111, and 145–153 (DPILATGST). Residues isoleucine 209 and 214-216 (GDA) contribute to the uracil site. Aspartate 215 is a 5-phospho-alpha-D-ribose 1-diphosphate binding site.

The protein belongs to the UPRTase family. The cofactor is Mg(2+).

The enzyme catalyses UMP + diphosphate = 5-phospho-alpha-D-ribose 1-diphosphate + uracil. It functions in the pathway pyrimidine metabolism; UMP biosynthesis via salvage pathway; UMP from uracil: step 1/1. Its activity is regulated as follows. Allosterically activated by GTP. In terms of biological role, catalyzes the conversion of uracil and 5-phospho-alpha-D-ribose 1-diphosphate (PRPP) to UMP and diphosphate. This is Uracil phosphoribosyltransferase from Natronomonas pharaonis (strain ATCC 35678 / DSM 2160 / CIP 103997 / JCM 8858 / NBRC 14720 / NCIMB 2260 / Gabara) (Halobacterium pharaonis).